The chain runs to 801 residues: Phenylalanine--tRNA ligase beta subunit (801 aa).

The 109-residue stretch at 39–147 folds into the tRNA-binding domain; it reads GGGLDEVVVA…TDLPLGVPVF (109 aa). One can recognise a B5 domain in the interval 401–477; sequence LPRRTVRFRV…RLNGYNNIPV (77 aa). Mg(2+)-binding residues include Asp-455, Asp-461, Glu-464, and Glu-465. One can recognise an FDX-ACB domain in the interval 708-801; the sequence is SRFPDTFRDI…LVKKLAVTIR (94 aa).

This sequence belongs to the phenylalanyl-tRNA synthetase beta subunit family. Type 1 subfamily. As to quaternary structure, tetramer of two alpha and two beta subunits. Mg(2+) serves as cofactor.

Its subcellular location is the cytoplasm. The catalysed reaction is tRNA(Phe) + L-phenylalanine + ATP = L-phenylalanyl-tRNA(Phe) + AMP + diphosphate + H(+). The protein is Phenylalanine--tRNA ligase beta subunit of Geobacter metallireducens (strain ATCC 53774 / DSM 7210 / GS-15).